Here is a 270-residue protein sequence, read N- to C-terminus: Formamidopyrimidine-DNA glycosylase (270 aa).

The Schiff-base intermediate with DNA role is filled by proline 2. The active-site Proton donor is glutamate 3. Lysine 58 acts as the Proton donor; for beta-elimination activity in catalysis. DNA is bound by residues histidine 90, arginine 109, and arginine 152. The segment at arginine 237–arginine 270 adopts an FPG-type zinc-finger fold. The active-site Proton donor; for delta-elimination activity is arginine 260.

The protein belongs to the FPG family. In terms of assembly, monomer. Zn(2+) is required as a cofactor.

The catalysed reaction is Hydrolysis of DNA containing ring-opened 7-methylguanine residues, releasing 2,6-diamino-4-hydroxy-5-(N-methyl)formamidopyrimidine.. It carries out the reaction 2'-deoxyribonucleotide-(2'-deoxyribose 5'-phosphate)-2'-deoxyribonucleotide-DNA = a 3'-end 2'-deoxyribonucleotide-(2,3-dehydro-2,3-deoxyribose 5'-phosphate)-DNA + a 5'-end 5'-phospho-2'-deoxyribonucleoside-DNA + H(+). Its function is as follows. Involved in base excision repair of DNA damaged by oxidation or by mutagenic agents. Acts as a DNA glycosylase that recognizes and removes damaged bases. Has a preference for oxidized purines, such as 7,8-dihydro-8-oxoguanine (8-oxoG). Has AP (apurinic/apyrimidinic) lyase activity and introduces nicks in the DNA strand. Cleaves the DNA backbone by beta-delta elimination to generate a single-strand break at the site of the removed base with both 3'- and 5'-phosphates. The protein is Formamidopyrimidine-DNA glycosylase of Sphingopyxis alaskensis (strain DSM 13593 / LMG 18877 / RB2256) (Sphingomonas alaskensis).